The sequence spans 334 residues: Phenylalanine--tRNA ligase alpha subunit (334 aa).

Glu249 is a Mg(2+) binding site.

The protein belongs to the class-II aminoacyl-tRNA synthetase family. Phe-tRNA synthetase alpha subunit type 1 subfamily. Tetramer of two alpha and two beta subunits. The cofactor is Mg(2+).

The protein localises to the cytoplasm. It catalyses the reaction tRNA(Phe) + L-phenylalanine + ATP = L-phenylalanyl-tRNA(Phe) + AMP + diphosphate + H(+). This Desulfatibacillum aliphaticivorans protein is Phenylalanine--tRNA ligase alpha subunit.